The following is a 696-amino-acid chain: DNA-directed RNA polymerase subunit beta N-terminal section (696 aa).

The protein belongs to the RNA polymerase beta chain family. In plastids the minimal PEP RNA polymerase catalytic core is composed of four subunits: alpha, beta, beta', and beta''. When a (nuclear-encoded) sigma factor is associated with the core the holoenzyme is formed, which can initiate transcription.

It is found in the plastid. It localises to the chloroplast. It catalyses the reaction RNA(n) + a ribonucleoside 5'-triphosphate = RNA(n+1) + diphosphate. In terms of biological role, DNA-dependent RNA polymerase catalyzes the transcription of DNA into RNA using the four ribonucleoside triphosphates as substrates. This chain is DNA-directed RNA polymerase subunit beta N-terminal section (rpoB1), found in Stigeoclonium helveticum (Green alga).